The following is a 545-amino-acid chain: Chaperonin GroEL (545 aa).

Residues 30–33 (TLGP), Lys-51, 87–91 (DGTTT), Gly-415, 479–481 (NAA), and Asp-495 each bind ATP. Residues 526-545 (KEDKPDLGNAGAGGNMGGMM) are disordered. Over residues 535–545 (AGAGGNMGGMM) the composition is skewed to gly residues.

This sequence belongs to the chaperonin (HSP60) family. Forms a cylinder of 14 subunits composed of two heptameric rings stacked back-to-back. Interacts with the co-chaperonin GroES.

The protein localises to the cytoplasm. The enzyme catalyses ATP + H2O + a folded polypeptide = ADP + phosphate + an unfolded polypeptide.. In terms of biological role, together with its co-chaperonin GroES, plays an essential role in assisting protein folding. The GroEL-GroES system forms a nano-cage that allows encapsulation of the non-native substrate proteins and provides a physical environment optimized to promote and accelerate protein folding. The protein is Chaperonin GroEL of Blochmanniella pennsylvanica (strain BPEN).